A 128-amino-acid chain; its full sequence is Small ribosomal subunit protein uS11 (128 aa).

Belongs to the universal ribosomal protein uS11 family. In terms of assembly, part of the 30S ribosomal subunit. Interacts with proteins S7 and S18. Binds to IF-3.

Located on the platform of the 30S subunit, it bridges several disparate RNA helices of the 16S rRNA. Forms part of the Shine-Dalgarno cleft in the 70S ribosome. In Methylococcus capsulatus (strain ATCC 33009 / NCIMB 11132 / Bath), this protein is Small ribosomal subunit protein uS11.